The primary structure comprises 412 residues: Multifunctional CCA protein (412 aa).

Residues Gly8 and Arg11 each coordinate ATP. CTP-binding residues include Gly8 and Arg11. Mg(2+) contacts are provided by Asp21 and Asp23. Residues Arg91, Arg137, and Arg140 each coordinate ATP. CTP-binding residues include Arg91, Arg137, and Arg140. The HD domain maps to 228-329 (TGIHTLMTLS…VKLFDSIDAW (102 aa)).

The protein belongs to the tRNA nucleotidyltransferase/poly(A) polymerase family. Bacterial CCA-adding enzyme type 1 subfamily. As to quaternary structure, monomer. Can also form homodimers and oligomers. The cofactor is Mg(2+). Ni(2+) is required as a cofactor.

The enzyme catalyses a tRNA precursor + 2 CTP + ATP = a tRNA with a 3' CCA end + 3 diphosphate. It carries out the reaction a tRNA with a 3' CCA end + 2 CTP + ATP = a tRNA with a 3' CCACCA end + 3 diphosphate. Its function is as follows. Catalyzes the addition and repair of the essential 3'-terminal CCA sequence in tRNAs without using a nucleic acid template. Adds these three nucleotides in the order of C, C, and A to the tRNA nucleotide-73, using CTP and ATP as substrates and producing inorganic pyrophosphate. tRNA 3'-terminal CCA addition is required both for tRNA processing and repair. Also involved in tRNA surveillance by mediating tandem CCA addition to generate a CCACCA at the 3' terminus of unstable tRNAs. While stable tRNAs receive only 3'-terminal CCA, unstable tRNAs are marked with CCACCA and rapidly degraded. This chain is Multifunctional CCA protein, found in Escherichia coli (strain K12 / MC4100 / BW2952).